The sequence spans 82 residues: Protein ImpC (82 aa).

The protein belongs to the DinI family.

Its function is as follows. The imp operon is involved in UV protection and mutation, however the ImpC protein is not essential for these functions. This chain is Protein ImpC (impC), found in Salmonella typhimurium.